The following is a 110-amino-acid chain: Insulin (110 aa).

The signal sequence occupies residues 1 to 24 (MALWMRLLPLLALLALWGPDPAAA). Cystine bridges form between C31/C96, C43/C109, and C95/C100. A propeptide spans 57-87 (EAEDLQVGQVELGGGPGAGSLQPLALEGSLQ) (c peptide).

It belongs to the insulin family. In terms of assembly, heterodimer of a B chain and an A chain linked by two disulfide bonds.

Its subcellular location is the secreted. Insulin decreases blood glucose concentration. It increases cell permeability to monosaccharides, amino acids and fatty acids. It accelerates glycolysis, the pentose phosphate cycle, and glycogen synthesis in liver. The protein is Insulin (INS) of Gorilla gorilla gorilla (Western lowland gorilla).